The primary structure comprises 407 residues: NADH-quinone oxidoreductase subunit D (407 aa).

This sequence belongs to the complex I 49 kDa subunit family. In terms of assembly, NDH-1 is composed of 14 different subunits. Subunits NuoB, C, D, E, F, and G constitute the peripheral sector of the complex.

It localises to the cell inner membrane. The enzyme catalyses a quinone + NADH + 5 H(+)(in) = a quinol + NAD(+) + 4 H(+)(out). NDH-1 shuttles electrons from NADH, via FMN and iron-sulfur (Fe-S) centers, to quinones in the respiratory chain. The immediate electron acceptor for the enzyme in this species is believed to be ubiquinone. Couples the redox reaction to proton translocation (for every two electrons transferred, four hydrogen ions are translocated across the cytoplasmic membrane), and thus conserves the redox energy in a proton gradient. This Roseobacter denitrificans (strain ATCC 33942 / OCh 114) (Erythrobacter sp. (strain OCh 114)) protein is NADH-quinone oxidoreductase subunit D.